Reading from the N-terminus, the 141-residue chain is U1 small nuclear ribonucleoprotein C (141 aa).

The Matrin-type zinc-finger motif lies at 4 to 36 (YYCEYCDKYLTHDSPSVRKSHTIGKVHQQAVTL). The interval 69-141 (LLPPNMVPGQ…SNSPPSNNDQ (73 aa)) is disordered. Positions 83-97 (MMPPGQFPFPPPPGQ) are enriched in pro residues. Low complexity-rich tracts occupy residues 100–110 (GGMPPHQQQPM) and 124–141 (QQSA…NNDQ).

The protein belongs to the U1 small nuclear ribonucleoprotein C family. In terms of assembly, component of the U1 snRNP. The U1 snRNP is composed of the U1 snRNA and the 7 core Sm proteins SNRPB, SNRPD1, SNRPD2, SNRPD3, SNRPE, SNRPF and SNRPG that assemble in a heptameric protein ring on the Sm site of the small nuclear RNA to form the core snRNP, and at least 3 U1 snRNP-specific proteins SNRNP70/U1-70K, SNRPA/U1-A and SNRPC/U1-C. SNRPC/U1-C interacts with U1 snRNA and the 5' splice-site region of the pre-mRNA.

It is found in the nucleus. Component of the spliceosomal U1 snRNP, which is essential for recognition of the pre-mRNA 5' splice-site and the subsequent assembly of the spliceosome. SNRPC/U1-C is directly involved in initial 5' splice-site recognition for both constitutive and regulated alternative splicing. The interaction with the 5' splice-site seems to precede base-pairing between the pre-mRNA and the U1 snRNA. Stimulates commitment or early (E) complex formation by stabilizing the base pairing of the 5' end of the U1 snRNA and the 5' splice-site region. The chain is U1 small nuclear ribonucleoprotein C from Heterostelium pallidum (strain ATCC 26659 / Pp 5 / PN500) (Cellular slime mold).